The sequence spans 252 residues: Ribonuclease HII (252 aa).

The RNase H type-2 domain occupies 41–232; the sequence is LLVAGVDEAG…VRLALEGREQ (192 aa). A divalent metal cation is bound by residues Asp47, Glu48, and Asp140.

This sequence belongs to the RNase HII family. Mn(2+) is required as a cofactor. The cofactor is Mg(2+).

Its subcellular location is the cytoplasm. It catalyses the reaction Endonucleolytic cleavage to 5'-phosphomonoester.. Functionally, endonuclease that specifically degrades the RNA of RNA-DNA hybrids. In Xanthomonas oryzae pv. oryzae (strain KACC10331 / KXO85), this protein is Ribonuclease HII.